Here is a 359-residue protein sequence, read N- to C-terminus: Decorin (359 aa).

A signal peptide spans 1–16 (MKATIILLLLAQVSWA). A propeptide spanning residues 17–30 (GPFQQRGLFDFMLE) is cleaved from the precursor. O-linked (Xyl...) (glycosaminoglycan) serine glycosylation is present at Ser34. 2 cysteine pairs are disulfide-bonded: Cys54–Cys60 and Cys58–Cys67. LRR repeat units follow at residues 73 to 93 (DKVP…NNKI), 94 to 117 (TEIK…NNKI), 118 to 141 (SKVS…KNQL), 142 to 162 (KELP…ENEI), 163 to 186 (TKVR…TNPL), 187 to 212 (KSSG…DTNI), 213 to 233 (TSIP…GNKI), 234 to 257 (SRVD…FNSI), 258 to 281 (SAVD…NNKL), 282 to 304 (TRVP…NNNI), 305 to 334 (SVVG…SNPV), and 335 to 359 (QYWE…GNYK). An N-linked (GlcNAc...) asparagine glycan is attached at Asn211. N-linked (GlcNAc...) asparagine glycans are attached at residues Asn262 and Asn303. Cys313 and Cys346 are joined by a disulfide.

Belongs to the small leucine-rich proteoglycan (SLRP) family. SLRP class I subfamily. In terms of assembly, binds to type I and type II collagen, fibronectin and TGF-beta. Forms a ternary complex with MFAP2 and ELN. Interacts with DPT. Post-translationally, the attached glycosaminoglycan chain can be either chondroitin sulfate or dermatan sulfate depending upon the tissue of origin. In terms of tissue distribution, detected in placenta (at protein level). Detected in cerebrospinal fluid, fibroblasts and urine (at protein level).

It is found in the secreted. The protein localises to the extracellular space. It localises to the extracellular matrix. Its function is as follows. May affect the rate of fibrils formation. The protein is Decorin (DCN) of Homo sapiens (Human).